Consider the following 431-residue polypeptide: Protein translocase subunit SecY (431 aa).

At 1 to 17 (MFKTISNFMRVSDIRNK) the chain is on the cytoplasmic side. The chain crosses the membrane as a helical span at residues 18–38 (IIFTLLMLIVFRIGAFIPVPY). Residues 39–66 (VNAEALQAQSQMGVFDLLNTFGGGALYQ) are Extracellular-facing. Residues 67 to 87 (FSIFAMGITPYITASIIIQLL) traverse the membrane as a helical segment. The Cytoplasmic portion of the chain corresponds to 88 to 115 (QMDVVPKFTEWSKQGEVGRRKLAQFTRY). A helical transmembrane segment spans residues 116–136 (FTIVLGFIQALGMSYGFNNLA). The Extracellular portion of the chain corresponds to 137-145 (NGMLIEKSG). The chain crosses the membrane as a helical span at residues 146 to 166 (VSTYLIIALVLTGGTAFLMWL). The Cytoplasmic segment spans residues 167–177 (GEQITSHGVGN). A helical transmembrane segment spans residues 178-198 (GISIIIFAGIVSSIPKTIGQI). Topologically, residues 199–213 (YETQFVGSNDQLFIH) are extracellular. Residues 214-234 (IVKVALLVIAILAVIVGVIFI) form a helical membrane-spanning segment. Over 235 to 261 (QQAVRKIAIQYAKGTGRSPAGGGQSTH) the chain is Cytoplasmic. The helical transmembrane segment at 262–282 (LPLKVNPAGVIPVIFAVAFLI) threads the bilayer. Topologically, residues 283-308 (TPRTIASFFGTNDVTKWIQNNFDNTH) are extracellular. The helical transmembrane segment at 309 to 329 (PVGMAIYVALIIAFTYFYAFV) threads the bilayer. Residues 330-368 (QVNPEQMADNLKKQGGYIPGVRPGKMTQDRITSILYRLT) are Cytoplasmic-facing. 2 helical membrane passes run 369-389 (FVGS…IQFA) and 390-410 (GLPQ…GVAL). At 411–431 (ETMKQLESQLVKRNYRGFMKN) the chain is on the cytoplasmic side.

Belongs to the SecY/SEC61-alpha family. As to quaternary structure, component of the Sec protein translocase complex. Heterotrimer consisting of SecY, SecE and SecG subunits. The heterotrimers can form oligomers, although 1 heterotrimer is thought to be able to translocate proteins. Interacts with the ribosome. Interacts with SecDF, and other proteins may be involved. Interacts with SecA. Interacts with FloT.

The protein localises to the cell membrane. It localises to the membrane raft. Its function is as follows. The central subunit of the protein translocation channel SecYEG. Consists of two halves formed by TMs 1-5 and 6-10. These two domains form a lateral gate at the front which open onto the bilayer between TMs 2 and 7, and are clamped together by SecE at the back. The channel is closed by both a pore ring composed of hydrophobic SecY resides and a short helix (helix 2A) on the extracellular side of the membrane which forms a plug. The plug probably moves laterally to allow the channel to open. The ring and the pore may move independently. The chain is Protein translocase subunit SecY from Bacillus subtilis (strain 168).